The chain runs to 214 residues: uncharacterized protein (214 aa).

The region spanning 2–118 (KIVIADDHHV…ELVKTRQVHG (117 aa)) is the Response regulatory domain. Asp-53 bears the 4-aspartylphosphate mark. The HTH luxR-type domain maps to 142–207 (EKEKYYQLTR…QAALFAVKYN (66 aa)). Residues 166 to 185 (NKEIAAALFISEKTVKTHVS) constitute a DNA-binding region (H-T-H motif).

In terms of processing, phosphorylated by YhcY.

It is found in the cytoplasm. Its function is as follows. Member of the two-component regulatory system YhcY/YhcZ. This is an uncharacterized protein from Bacillus subtilis (strain 168).